A 218-amino-acid polypeptide reads, in one-letter code: MLNSPLTSVLFVLLFVLSPIYGAFEYMQLVLQWPTAFCHTTPCKRIPNNFTIHGLWPDNVSTTLNYCAAKENFKNIEDDTKKDDLYKRWPDLTTAETYCKQHQNFWRHEYNKHGKCCSESYNREQYFDLAMALKDKFDLLSSLRNHGIIPGRGMKYTVQKINSTIKKITQGYPNLSCTKGIMELVEIGICFDSMVKNVINCPHPKTCKPTGSNEIKFP.

The N-terminal stretch at 1–22 (MLNSPLTSVLFVLLFVLSPIYG) is a signal peptide. Gln32 lines the RNA pocket. The cysteines at positions 38 and 43 are disulfide-linked. Asn49 is a glycosylation site (N-linked (GlcNAc...) asparagine). His53 contacts RNA. His53 functions as the Proton donor in the catalytic mechanism. N-linked (GlcNAc...) asparagine glycosylation is present at Asn59. An intrachain disulfide couples Cys67 to Cys116. Residues 91-92 (DL), Phe105, 108-109 (HE), and 112-113 (KH) contribute to the RNA site. Glu109 is an active-site residue. His113 serves as the catalytic Proton acceptor. N-linked (GlcNAc...) asparagine glycosylation occurs at Asn162. 2 cysteine pairs are disulfide-bonded: Cys177/Cys207 and Cys190/Cys201.

The protein belongs to the RNase T2 family.

The protein localises to the secreted. Its subcellular location is the extracellular space. The catalysed reaction is a ribonucleotidyl-ribonucleotide-RNA + H2O = a 3'-end 3'-phospho-ribonucleotide-RNA + a 5'-end dephospho-ribonucleoside-RNA + H(+). Its function is as follows. Self-incompatibility (SI) is the inherited ability of a flowering plant to prevent self-fertilization by discriminating between self and non-self pollen during pollination. In many species of the Solanaceae, self-incompatibility is controlled by the single, multiallelic locus S. This stylar glycoprotein is associated with expression of self-incompatibility in potato. In Nicotiana alata (Winged tobacco), this protein is Ribonuclease S-7.